The chain runs to 129 residues: M-zodatoxin-Lt8b (129 aa).

Residues 1–20 (MKYFVVALALVAAFACIAES) form the signal peptide. A propeptide spanning residues 21 to 60 (KPAESEHELAEVEEENELADLEDAVWLEHLADLSDLEEAR) is cleaved from the precursor. The Processing quadruplet motif signature appears at 57–60 (EEAR).

In terms of processing, cleavage of the propeptide depends on the processing quadruplet motif (XXXR, with at least one of X being E). Expressed by the venom gland.

It localises to the secreted. Functionally, insecticidal, cytolytic and antimicrobial peptide. Forms voltage-dependent, ion-permeable channels in membranes. At high concentration causes cell membrane lysis. In Lachesana tarabaevi (Spider), this protein is M-zodatoxin-Lt8b (cit 1-2).